The following is a 54-amino-acid chain: UPF0391 membrane protein Reut_A0124 (54 aa).

2 consecutive transmembrane segments (helical) span residues 5-25 (ALVFFVIALIAAVFGFGGIAA) and 30-50 (IAKILFFIFLIVALVTAVMGL).

It belongs to the UPF0391 family.

It is found in the cell membrane. The chain is UPF0391 membrane protein Reut_A0124 from Cupriavidus pinatubonensis (strain JMP 134 / LMG 1197) (Cupriavidus necator (strain JMP 134)).